The chain runs to 576 residues: Minor capsid protein P2 (576 aa).

The hydrophobic stretch occupies residues 13–35; sequence LFLYTNSIEMELLAVASIIGYGL. A disordered region spans residues 322–348; sequence TRGRPRTGDGDTEPIINPNGERDGTGS.

As to quaternary structure, interacts with the major capsid protein.

The protein resides in the virion. Functionally, one of the minor capsid proteins that constitute a network internal to the major capsid proteins and outside the lipid membrane. The minor capsid proteins glue and stabilize the capsomers. Also acts as a molecular tape measure protein that determines the size of the viral capsid. In Chlorella (PBCV-1), this protein is Minor capsid protein P2.